Reading from the N-terminus, the 344-residue chain is Glycerol-3-phosphate dehydrogenase [NAD(P)+] 2 (344 aa).

NADPH-binding residues include Ser-12, Trp-13, Arg-33, Arg-34, and Lys-107. Positions 107, 138, and 140 each coordinate sn-glycerol 3-phosphate. Ala-142 contacts NADPH. Residues Lys-193, Asp-246, Ser-256, Arg-257, and Asn-258 each contribute to the sn-glycerol 3-phosphate site. Residue Lys-193 is the Proton acceptor of the active site. Arg-257 serves as a coordination point for NADPH. Positions 281 and 283 each coordinate NADPH.

The protein belongs to the NAD-dependent glycerol-3-phosphate dehydrogenase family.

It localises to the cytoplasm. The enzyme catalyses sn-glycerol 3-phosphate + NAD(+) = dihydroxyacetone phosphate + NADH + H(+). It carries out the reaction sn-glycerol 3-phosphate + NADP(+) = dihydroxyacetone phosphate + NADPH + H(+). The protein operates within membrane lipid metabolism; glycerophospholipid metabolism. Functionally, catalyzes the reduction of the glycolytic intermediate dihydroxyacetone phosphate (DHAP) to sn-glycerol 3-phosphate (G3P), the key precursor for phospholipid synthesis. The polypeptide is Glycerol-3-phosphate dehydrogenase [NAD(P)+] 2 (Salinibacter ruber (strain DSM 13855 / M31)).